A 628-amino-acid chain; its full sequence is Growth hormone receptor (628 aa).

The N-terminal stretch at 1–18 (MDLWQLLLTLAVVGSSNA) is a signal peptide. Over 19–266 (FVGREAVTVT…FTCEEEFQFP (248 aa)) the chain is Extracellular. N-linked (GlcNAc...) asparagine glycans are attached at residues N33, N40, and N46. 2 cysteine pairs are disulfide-bonded: C56/C66 and C101/C112. N115 is a glycosylation site (N-linked (GlcNAc...) asparagine). C126 and C140 form a disulfide bridge. One can recognise a Fibronectin type-III domain in the interval 151 to 254 (PPTGLNWTLM…EILYITLPQS (104 aa)). 3 N-linked (GlcNAc...) asparagine glycosylation sites follow: N156, N161, and N200. The WSXWS motif signature appears at 240-244 (YGEFS). The chain crosses the membrane as a helical span at residues 267–287 (WFLIMIFGIFGLTVMLLVVMF). The Cytoplasmic portion of the chain corresponds to 288–628 (SKQQRIKMLI…STDQLNKIML (341 aa)). The interval 294–379 (KMLILPPVPV…HQKSLNILGA (86 aa)) is required for JAK2 binding. The Box 1 motif motif lies at 297–305 (ILPPVPVPK). Residues 340 to 349 (DSWVEFIELD) carry the UbE motif motif. Residue S341 is modified to Phosphoserine. Y483 and Y585 each carry phosphotyrosine.

This sequence belongs to the type I cytokine receptor family. Type 1 subfamily. On growth hormone (GH) binding, forms homodimers and binds JAK2 via a box 1-containing domain. Post-translationally, the soluble form (GHBP) is produced by phorbol ester-promoted proteolytic cleavage at the cell surface (shedding) by ADAM17/TACE. Shedding is inhibited by growth hormone (GH) binding to the receptor probably due to a conformational change in GHR rendering the receptor inaccessible to ADAM17. In terms of processing, on GH binding, phosphorylated on tyrosine residues in the cytoplasmic domain by JAK2. Ubiquitinated by the ECS(SOCS2) complex following ligand-binding and phosphorylation by JAK2, leading to its degradation by the proteasome. Regulation by the ECS(SOCS2) complex acts as a negative feedback loop of growth hormone receptor signaling. Ubiquitination is not sufficient for GHR internalization.

It localises to the cell membrane. The protein resides in the secreted. In terms of biological role, receptor for pituitary gland growth hormone (GH1) involved in regulating postnatal body growth. On ligand binding, couples to the JAK2/STAT5 pathway. Its function is as follows. The soluble form (GHBP) acts as a reservoir of growth hormone in plasma and may be a modulator/inhibitor of GH signaling. In Cavia porcellus (Guinea pig), this protein is Growth hormone receptor (GHR).